The chain runs to 574 residues: Developmental and secondary metabolism regulator veA (574 aa).

Disordered stretches follow at residues 1-22 (MATR…SRIT), 39-60 (ERAR…VDPP), 255-500 (RSSD…GAGK), and 513-540 (RSYE…YPRR). The Velvet domain maps to 25 to 230 (GKKLTYKLNV…AEQGCRVRIR (206 aa)). Positions 39–44 (ERARAC) match the Nuclear localization signal motif. Pro residues-rich tracts occupy residues 314 to 323 (RPLPPAPGPA) and 330 to 341 (PAPPAPPAPPSH). Polar residues-rich tracts occupy residues 343–353 (PGYQSHLSFGS), 385–394 (HARNPSTSAE), 406–415 (RMSTERSSYP), and 448–458 (VAQSAAPRSQT). Residues 457–501 (QTPSSSLVPSLPPLKALSGDYPNNLSQSSSSTSQSPSHDLGAGKK) form a PEST region. 2 stretches are compositionally biased toward low complexity: residues 459–474 (PSSS…KALS) and 482–493 (SQSSSSTSQSPS). The segment covering 513–525 (RSYEDSFGHDDRP) has biased composition (basic and acidic residues).

This sequence belongs to the velvet family. VeA subfamily. As to quaternary structure, component of the heterotrimeric velvet complex composed of laeA, veA and velB; VeA acting as a bridging protein between laeA and velB.

The protein localises to the nucleus. It localises to the cytoplasm. Functionally, component of the velvet transcription factor complex that controls sexual/asexual developmental ratio in response to light, promoting sexual development in the darkness while stimulating asexual sporulation under illumination. The velvet complex hat acts as a global regulator for secondary metabolite gene expression. Controls the expression of the penicillin gene cluster. The chain is Developmental and secondary metabolism regulator veA from Aspergillus oryzae (strain ATCC 42149 / RIB 40) (Yellow koji mold).